A 578-amino-acid polypeptide reads, in one-letter code: Proteasome-associated ATPase (578 aa).

Residues 8–84 are a coiled coil; it reads TAAELRNQVR…LKEEVDRLAQ (77 aa). Residue 267 to 272 coordinates ATP; sequence GCGKTL. Residues 577-578 are docks into pockets in the proteasome alpha-ring; sequence YL.

This sequence belongs to the AAA ATPase family. In terms of assembly, homohexamer. Assembles into a hexameric ring structure that caps the 20S proteasome core. Strongly interacts with the prokaryotic ubiquitin-like protein Pup through a hydrophobic interface; the interacting region of ARC lies in its N-terminal coiled-coil domain. There is one Pup binding site per ARC hexamer ring. Upon ATP-binding, the C-terminus of ARC interacts with the alpha-rings of the proteasome core, possibly by binding to the intersubunit pockets.

It participates in protein degradation; proteasomal Pup-dependent pathway. Functionally, ATPase which is responsible for recognizing, binding, unfolding and translocation of pupylated proteins into the bacterial 20S proteasome core particle. May be essential for opening the gate of the 20S proteasome via an interaction with its C-terminus, thereby allowing substrate entry and access to the site of proteolysis. Thus, the C-termini of the proteasomal ATPase may function like a 'key in a lock' to induce gate opening and therefore regulate proteolysis. This chain is Proteasome-associated ATPase, found in Kribbella flavida (strain DSM 17836 / JCM 10339 / NBRC 14399).